Here is a 362-residue protein sequence, read N- to C-terminus: Myricetin 3'-O-methyltransferase 4 (362 aa).

D229 provides a ligand contact to S-adenosyl-L-methionine. H267 acts as the Proton acceptor in catalysis.

Belongs to the class I-like SAM-binding methyltransferase superfamily. Cation-independent O-methyltransferase family. As to quaternary structure, homodimer. As to expression, mainly expressed in stem and petiole trichomes.

It carries out the reaction myricetin + S-adenosyl-L-methionine = laricitrin + S-adenosyl-L-homocysteine + H(+). It participates in flavonoid metabolism. Its function is as follows. Flavonoid 3'-O-methyltransferase involved in the biosynthesis of polymethoxylated flavonoids natural products such as myricetin derivatives, aroma compounds possessing antioxidant properties and exhibiting pharmacological activities such as anti-carcinogen, anti-viral, anti-thrombotic, anti-diabetic, anti-atherosclerotic, and anti-inflammatory effects. Catalyzes S-adenosylmethionine-dependent regioselective 3'-O-methylation of flavonoids; active on various hydroxylated flavonoid substrates, including myricetin, thus producing 3'-methyl myricetin (laricitrin). This chain is Myricetin 3'-O-methyltransferase 4, found in Solanum lycopersicum (Tomato).